A 405-amino-acid chain; its full sequence is Probable tRNA sulfurtransferase (405 aa).

The 106-residue stretch at D60 to T165 folds into the THUMP domain. Residues M183 to L184, H208 to F209, R265, G287, and Q296 each bind ATP.

The protein belongs to the ThiI family.

Its subcellular location is the cytoplasm. The enzyme catalyses [ThiI sulfur-carrier protein]-S-sulfanyl-L-cysteine + a uridine in tRNA + 2 reduced [2Fe-2S]-[ferredoxin] + ATP + H(+) = [ThiI sulfur-carrier protein]-L-cysteine + a 4-thiouridine in tRNA + 2 oxidized [2Fe-2S]-[ferredoxin] + AMP + diphosphate. It carries out the reaction [ThiS sulfur-carrier protein]-C-terminal Gly-Gly-AMP + S-sulfanyl-L-cysteinyl-[cysteine desulfurase] + AH2 = [ThiS sulfur-carrier protein]-C-terminal-Gly-aminoethanethioate + L-cysteinyl-[cysteine desulfurase] + A + AMP + 2 H(+). It functions in the pathway cofactor biosynthesis; thiamine diphosphate biosynthesis. Its function is as follows. Catalyzes the ATP-dependent transfer of a sulfur to tRNA to produce 4-thiouridine in position 8 of tRNAs, which functions as a near-UV photosensor. Also catalyzes the transfer of sulfur to the sulfur carrier protein ThiS, forming ThiS-thiocarboxylate. This is a step in the synthesis of thiazole, in the thiamine biosynthesis pathway. The sulfur is donated as persulfide by IscS. This chain is Probable tRNA sulfurtransferase, found in Lacticaseibacillus paracasei (strain ATCC 334 / BCRC 17002 / CCUG 31169 / CIP 107868 / KCTC 3260 / NRRL B-441) (Lactobacillus paracasei).